A 452-amino-acid chain; its full sequence is MNRQLVNILTALFAFFLGTNHFREAFCKDHDSRSGKHPSQTLSPSDFLDKLMGRTSGYDARIRPNFKGPPVNVTCNIFINSFGSVTETTMDYRVNIFLRQQWNDSRLAYSEYPDDSLDLDPSMLDSIWKPDLFFANEKGANFHDVTTDNKLLRISKNGKVLYSIRLTLTLSCPMDLKNFPMDVQTCTMQLESFEYTMNDLIFEWLSDGPVQVAEGLTLPQFILKEEKELGYCTKHYNTGKFTCIEVKFHLERQMGYYLIQMYIPSLLIVILSWVSFWINMDAAPARVALGITTVLTMTTQSSGSRASLPKVSYVKAIDIWMAVCLLFVFAALLEYAAVNFVSRQHKEFLRLRRRQKRQNKEEDVTRESRFNFSGYGMGHCLQVKDGTAVKATPANPLPQPPKDADAIKKKFVDRAKRIDTISRAAFPLAFLIFNIFYWITYKIIRHEDVHKK.

The N-terminal stretch at 1-27 is a signal peptide; it reads MNRQLVNILTALFAFFLGTNHFREAFC. Residues 28-256 are Extracellular-facing; sequence KDHDSRSGKH…KFHLERQMGY (229 aa). N-linked (GlcNAc...) asparagine glycosylation occurs at N72. R99 contributes to the glycine binding site. R99 serves as a coordination point for strychnine. N-linked (GlcNAc...) asparagine glycosylation occurs at N103. S163 contacts glycine. Cysteines 172 and 186 form a disulfide. E226 and E228 together coordinate Zn(2+). C232 and C243 are joined by a disulfide. T238 lines the glycine pocket. H249 lines the Zn(2+) pocket. A helical transmembrane segment spans residues 257-278; sequence YLIQMYIPSLLIVILSWVSFWI. At 279 to 283 the chain is on the cytoplasmic side; sequence NMDAA. The helical transmembrane segment at 284–304 threads the bilayer; it reads PARVALGITTVLTMTTQSSGS. Topologically, residues 305–315 are extracellular; that stretch reads RASLPKVSYVK. A helical membrane pass occupies residues 316-336; it reads AIDIWMAVCLLFVFAALLEYA. Topologically, residues 337-420 are cytoplasmic; sequence AVNFVSRQHK…FVDRAKRIDT (84 aa). The chain crosses the membrane as a helical span at residues 421–441; the sequence is ISRAAFPLAFLIFNIFYWITY. Residues 442–452 lie on the Extracellular side of the membrane; it reads KIIRHEDVHKK.

It belongs to the ligand-gated ion channel (TC 1.A.9) family. Glycine receptor (TC 1.A.9.3) subfamily. GLRA2 sub-subfamily. Interacts with GLRB. Heteropentamer composed of GLRA2 and GLRB; functional GLRB-GLRA2 heteropentamers contain four GLRA2 subunits and one GLRB subunit, although alternative subunit composition cannot be excluded. Homopentamer (in vitro). Both homopentamers and heteropentamers form functional ion channels, but their characteristics are subtly different.

It is found in the postsynaptic cell membrane. The protein localises to the synapse. Its subcellular location is the cell membrane. It localises to the cell projection. The catalysed reaction is chloride(in) = chloride(out). With respect to regulation, channel opening is triggered by extracellular glycine. Channel opening is also triggered by taurine and beta-alanine. Inhibited by strychnine. Inhibited by picrotoxin. Functionally, subunit of heteromeric glycine-gated chloride channels. Plays a role in synaptic plasticity. Contributes to the generation of inhibitory postsynaptic currents, and is involved in the down-regulation of neuronal excitability. Plays a role in cellular responses to ethanol. The sequence is that of Glycine receptor subunit alpha-2 from Rattus norvegicus (Rat).